Here is a 900-residue protein sequence, read N- to C-terminus: Protein translocase subunit SecA (900 aa).

ATP-binding positions include Gln87, 105 to 109, and Asp512; that span reads GEGKT. The segment covering 842–852 has biased composition (basic and acidic residues); it reads QQRREEAERLA. Positions 842–900 are disordered; that stretch reads QQRREEAERLARQQQLSHQEEDSLNTGSPAQADRKIGRNDPCPCGSGKKYKQCHGRLQK. 4 residues coordinate Zn(2+): Cys883, Cys885, Cys894, and His895. Over residues 889–900 the composition is skewed to basic residues; that stretch reads KKYKQCHGRLQK.

It belongs to the SecA family. Monomer and homodimer. Part of the essential Sec protein translocation apparatus which comprises SecA, SecYEG and auxiliary proteins SecDF-YajC and YidC. Zn(2+) is required as a cofactor.

The protein resides in the cell inner membrane. Its subcellular location is the cytoplasm. It catalyses the reaction ATP + H2O + cellular proteinSide 1 = ADP + phosphate + cellular proteinSide 2.. Part of the Sec protein translocase complex. Interacts with the SecYEG preprotein conducting channel. Has a central role in coupling the hydrolysis of ATP to the transfer of proteins into and across the cell membrane, serving both as a receptor for the preprotein-SecB complex and as an ATP-driven molecular motor driving the stepwise translocation of polypeptide chains across the membrane. The sequence is that of Protein translocase subunit SecA from Pectobacterium carotovorum subsp. carotovorum (strain PC1).